A 487-amino-acid chain; its full sequence is MAVGPTEGKQPPSESFSPTHHQIIAPSPILAVPTLAFSAAQVEIVCKTLEDSGDIERLARFLWSLPVALPNMHEILNCEAVLRARAVVAYHVGNFRELYAIIENHKFTKASYGKLQAMWLEAHYIEAEKLRGRSLGPVDKYRVRKKFPLPPTIWDGEQKTHCFKERTRSLLREWYLQDPYPNPTKKRELAKATGLNPTQVGNWFKNRRQRDRAAAAKNRIQHSQNSSGMGCRSRRADGAASPTPSDSSDSDISLGTHSPVPSSLQLQHSPGSTSNGANDREESLSVDDDKPRDLSGSLPLPLSLPLPLASPTHTPPQLPPGYGGGAGAGPGGPLTGPGCLPPFKLDAATSLFSAGCYLQSFSNLKEMSQQFPIQPIVLRPHPQLPQSLALNGASGGPPLHHPAYAAAYSVECVPGGHGPPHPPPKLRINSPEKLNSTAVAAAASVGGGGGNQHHEPTTTGYHHSGQLMLHRPFSTSPELKHSAPEIT.

Residues 154 to 214 (WDGEQKTHCF…KNRRQRDRAA (61 aa)) constitute a DNA-binding region (homeobox). Disordered regions lie at residues 182 to 330 (NPTK…GAGP) and 443 to 463 (ASVG…GYHH). The span at 255-277 (GTHSPVPSSLQLQHSPGSTSNGA) shows a compositional bias: polar residues. Residues 278–293 (NDREESLSVDDDKPRD) are compositionally biased toward basic and acidic residues. Over residues 294–312 (LSGSLPLPLSLPLPLASPT) the composition is skewed to low complexity. Over residues 321–330 (GYGGGAGAGP) the composition is skewed to gly residues.

The protein belongs to the SIX/Sine oculis homeobox family. As to expression, expressed during early development of the head. First expressed in a band around the anterior end of stage 5 blastoderm embryo, at 93% to 85% egg length. By gastrula stage, site of expression shifts to the dorsal-anterior region. At stage 12, expression is found in the clypeolabrum, the stomodaeum, and in ectoderm dorsal to the future supraesophageal ganglion.

The protein localises to the nucleus. May be involved in head or eye development; development of the clypeolabrum and several head sensory organs. In Drosophila melanogaster (Fruit fly), this protein is Protein Optix (Optix).